The primary structure comprises 83 residues: Conotoxin Im22.1 (83 aa).

An N-terminal signal peptide occupies residues 1 to 18 (MMMRVFIAMFFLLALVEA). The propeptide occupies 19-26 (GWPRLYDK).

Belongs to the conotoxin E superfamily. Contain 4 disulfide bonds. Expressed by the venom duct.

Its subcellular location is the secreted. Probable neurotoxin. This Conus imperialis (Imperial cone) protein is Conotoxin Im22.1.